The sequence spans 71 residues: uncharacterized protein (71 aa).

The N-terminal stretch at 1–23 is a signal peptide; it reads MTLLIILILKYLLCLENLKNISL. N20, N28, N44, and N50 each carry an N-linked (GlcNAc...) asparagine glycan.

It localises to the secreted. This is an uncharacterized protein from Dictyostelium discoideum (Social amoeba).